The following is a 350-amino-acid chain: Dihydroorotase (350 aa).

H17 and H19 together coordinate Zn(2+). Substrate-binding positions include 19–21 (HFR) and N45. Residues K103, H140, and H178 each contribute to the Zn(2+) site. The residue at position 103 (K103) is an N6-carboxylysine. H140 contacts substrate. Residue L223 coordinates substrate. D251 provides a ligand contact to Zn(2+). Residue D251 is part of the active site. Residues H255 and A267 each coordinate substrate.

The protein belongs to the metallo-dependent hydrolases superfamily. DHOase family. Class II DHOase subfamily. In terms of assembly, homodimer. Zn(2+) is required as a cofactor.

It carries out the reaction (S)-dihydroorotate + H2O = N-carbamoyl-L-aspartate + H(+). Its pathway is pyrimidine metabolism; UMP biosynthesis via de novo pathway; (S)-dihydroorotate from bicarbonate: step 3/3. Catalyzes the reversible cyclization of carbamoyl aspartate to dihydroorotate. This chain is Dihydroorotase, found in Photorhabdus laumondii subsp. laumondii (strain DSM 15139 / CIP 105565 / TT01) (Photorhabdus luminescens subsp. laumondii).